Here is a 235-residue protein sequence, read N- to C-terminus: Class B acid phosphatase (235 aa).

The first 22 residues, 1–22 (MKNLLKLSAIAILAASAVSTFA), serve as a signal peptide directing secretion. Asp67 (nucleophile) is an active-site residue. Residues Asp67 and Asp69 each coordinate Mg(2+). Asp69 functions as the Proton donor in the catalytic mechanism. Residues 135–136 (TG) and Lys175 each bind substrate. A Mg(2+)-binding site is contributed by Asp190.

It belongs to the class B bacterial acid phosphatase family. As to quaternary structure, homotetramer. Requires Mg(2+) as cofactor.

The protein localises to the periplasm. The enzyme catalyses a phosphate monoester + H2O = an alcohol + phosphate. Dephosphorylates several organic phosphate monoesters. Also has a phosphotransferase activity catalyzing the transfer of low-energy phosphate groups from organic phosphate monoesters to free hydroxyl groups of various organic compounds. The sequence is that of Class B acid phosphatase from Haemophilus parainfluenzae (strain T3T1).